The primary structure comprises 241 residues: Ribosomal RNA small subunit methyltransferase J (241 aa).

S-adenosyl-L-methionine contacts are provided by residues 94-95 and D163; that span reads RD.

The protein belongs to the methyltransferase superfamily. RsmJ family.

Its subcellular location is the cytoplasm. It catalyses the reaction guanosine(1516) in 16S rRNA + S-adenosyl-L-methionine = N(2)-methylguanosine(1516) in 16S rRNA + S-adenosyl-L-homocysteine + H(+). Functionally, specifically methylates the guanosine in position 1516 of 16S rRNA. This chain is Ribosomal RNA small subunit methyltransferase J, found in Francisella tularensis subsp. novicida (strain U112).